A 153-amino-acid polypeptide reads, in one-letter code: Hsp90 co-chaperone HCH1 (153 aa).

It belongs to the AHA1 family. Monomer. Interacts with HSP82.

The protein localises to the cytoplasm. Its subcellular location is the nucleus. Its function is as follows. Co-chaperone that binds to the molecular chaperone HSP82 and stimulates its ATPase activity. Although not essential, it confers thermotolerance when intracellular levels of HSP82 are limiting. The polypeptide is Hsp90 co-chaperone HCH1 (HCH1) (Saccharomyces cerevisiae (strain ATCC 204508 / S288c) (Baker's yeast)).